We begin with the raw amino-acid sequence, 442 residues long: Microfibrillar-associated protein 1 (442 aa).

Disordered regions lie at residues 1–34 (MSAP…YGEG) and 113–203 (EVVS…PRLK). Acidic residues-rich tracts occupy residues 134–148 (DTSE…DEEI) and 181–198 (ESEL…EDEM).

Belongs to the MFAP1 family. Component of the spliceosome B complex. Interacts with PRPF38A (via N-terminal interaction domain). In terms of tissue distribution, widely expressed.

The protein resides in the nucleus. Its function is as follows. Involved in pre-mRNA splicing as a component of the spliceosome. In Gallus gallus (Chicken), this protein is Microfibrillar-associated protein 1.